The sequence spans 262 residues: ATP synthase subunit a (262 aa).

The next 6 helical transmembrane spans lie at threonine 50–lysine 70, methionine 107–isoleucine 127, phenylalanine 141–valine 161, leucine 194–isoleucine 214, valine 218–valine 238, and glutamine 239–alanine 259.

Belongs to the ATPase A chain family. F-type ATPases have 2 components, CF(1) - the catalytic core - and CF(0) - the membrane proton channel. CF(1) has five subunits: alpha(3), beta(3), gamma(1), delta(1), epsilon(1). CF(0) has three main subunits: a(1), b(2) and c(9-12). The alpha and beta chains form an alternating ring which encloses part of the gamma chain. CF(1) is attached to CF(0) by a central stalk formed by the gamma and epsilon chains, while a peripheral stalk is formed by the delta and b chains.

Its subcellular location is the cell membrane. Functionally, key component of the proton channel; it plays a direct role in the translocation of protons across the membrane. The protein is ATP synthase subunit a of Desulforamulus reducens (strain ATCC BAA-1160 / DSM 100696 / MI-1) (Desulfotomaculum reducens).